A 211-amino-acid chain; its full sequence is Thiamine-phosphate synthase (211 aa).

4-amino-2-methyl-5-(diphosphooxymethyl)pyrimidine-binding positions include 43 to 47 (QLRDK) and Asn-75. Mg(2+)-binding residues include Asp-76 and Asp-95. Ser-114 is a binding site for 4-amino-2-methyl-5-(diphosphooxymethyl)pyrimidine. Residue 140–142 (TAS) coordinates 2-[(2R,5Z)-2-carboxy-4-methylthiazol-5(2H)-ylidene]ethyl phosphate. Position 143 (Lys-143) interacts with 4-amino-2-methyl-5-(diphosphooxymethyl)pyrimidine. Residues Gly-170 and 190–191 (IS) each bind 2-[(2R,5Z)-2-carboxy-4-methylthiazol-5(2H)-ylidene]ethyl phosphate.

This sequence belongs to the thiamine-phosphate synthase family. The cofactor is Mg(2+).

It catalyses the reaction 2-[(2R,5Z)-2-carboxy-4-methylthiazol-5(2H)-ylidene]ethyl phosphate + 4-amino-2-methyl-5-(diphosphooxymethyl)pyrimidine + 2 H(+) = thiamine phosphate + CO2 + diphosphate. The enzyme catalyses 2-(2-carboxy-4-methylthiazol-5-yl)ethyl phosphate + 4-amino-2-methyl-5-(diphosphooxymethyl)pyrimidine + 2 H(+) = thiamine phosphate + CO2 + diphosphate. It carries out the reaction 4-methyl-5-(2-phosphooxyethyl)-thiazole + 4-amino-2-methyl-5-(diphosphooxymethyl)pyrimidine + H(+) = thiamine phosphate + diphosphate. The protein operates within cofactor biosynthesis; thiamine diphosphate biosynthesis; thiamine phosphate from 4-amino-2-methyl-5-diphosphomethylpyrimidine and 4-methyl-5-(2-phosphoethyl)-thiazole: step 1/1. Its function is as follows. Condenses 4-methyl-5-(beta-hydroxyethyl)thiazole monophosphate (THZ-P) and 2-methyl-4-amino-5-hydroxymethyl pyrimidine pyrophosphate (HMP-PP) to form thiamine monophosphate (TMP). The polypeptide is Thiamine-phosphate synthase (Coprothermobacter proteolyticus (strain ATCC 35245 / DSM 5265 / OCM 4 / BT)).